A 295-amino-acid chain; its full sequence is Polyprenyl transferase dpmaC (295 aa).

8 helical membrane-spanning segments follow: residues 39-59 (LFCV…NDWI), 84-104 (QAFV…HVML), 109-124 (VHVI…YPFL), 131-151 (KLHI…AIPG), 168-188 (YCLP…TAYS), 213-233 (LVLV…LTQF), 237-257 (WLWV…LALF), and 271-291 (SNFV…LLKA).

It belongs to the UbiA prenyltransferase family. The cofactor is Mg(2+).

The protein localises to the membrane. It participates in secondary metabolite biosynthesis; terpenoid biosynthesis. Functionally, polyprenyl transferase; part of the gene cluster that mediates the biosynthesis of the diterpenoid pyrones subglutinols A and B. The first step of the pathway is the synthesis of the alpha-pyrone moiety by the polyketide synthase dpmaA via condensation of one acetyl-CoA starter unit with 3 malonyl-CoA units and 2 methylations. The alpha-pyrone is then combined with geranylgeranyl pyrophosphate (GGPP) formed by the GGPP synthase dpmaD through the action of the prenyltransferase dpmaC to yield a linear alpha-pyrone diterpenoid. Subsequent steps in the diterpenoid pyrone biosynthetic pathway involve the decalin core formation, which is initiated by the epoxidation of the C10-C11 olefin by the FAD-dependent oxidoreductase dpmaE, and is followed by a cyclization cascade catalyzed by the terpene cyclase dpmaB. The dehydrogenase dpmaF is then involved in tetrahydrofuran (THF) ring formation at the C5 unit to complete the formation of subglutinols A and B. The sequence is that of Polyprenyl transferase dpmaC from Metarhizium anisopliae (Entomophthora anisopliae).